Here is a 273-residue protein sequence, read N- to C-terminus: Torsin-1A (273 aa).

Residues 45 to 205 (KPKKPLTLSL…VSVFNNKNSG (161 aa)) form an interaction with SNAPIN region. Residue 56–63 (GWTGTGKN) coordinates ATP. N97 and N112 each carry an N-linked (GlcNAc...) asparagine glycan.

This sequence belongs to the ClpA/ClpB family. Torsin subfamily. As to quaternary structure, homohexamer. Interacts with TOR1B; the interaction may be specific of neural tissues. Interacts (ATP-bound) with TOR1AIP1 and TOR1AIP2; the interactions induce ATPase activity. Interacts with KLHL14; preferentially when ATP-free. Interacts with KLC1 (via TPR repeats); the interaction associates TOR1A with the kinesin oligomeric complex. Interacts with COPS4; the interaction associates TOR1A with the CSN complex. Interacts with SNAPIN; the interaction is direct and associates SNAPIN with the CSN complex. Interacts with STON2. Interacts (ATP-bound) with SYNE3 (via KASH domain); the interaction is required for SYNE3 nuclear envelope localization. Interacts with VIM; the interaction associates TOR1A with the cytoskeleton. Interacts with PLEC. Interacts (ATP-bound) with SLC6A3; regulates SLC6A3 transport to the plasma membrane. Post-translationally, N-glycosylated.

It localises to the endoplasmic reticulum lumen. The protein localises to the nucleus membrane. The protein resides in the cell projection. It is found in the growth cone. Its subcellular location is the cytoplasmic vesicle membrane. It localises to the synapse. The protein localises to the synaptosome. The protein resides in the cytoplasm. It is found in the cytoskeleton. The catalysed reaction is ATP + H2O = ADP + phosphate + H(+). In terms of biological role, protein with chaperone functions important for the control of protein folding, processing, stability and localization as well as for the reduction of misfolded protein aggregates. Involved in the regulation of synaptic vesicle recycling, controls STON2 protein stability in collaboration with the COP9 signalosome complex (CSN). In the nucleus, may link the cytoskeleton with the nuclear envelope, this mechanism seems to be crucial for the control of nuclear polarity, cell movement and, specifically in neurons, nuclear envelope integrity. Participates in the cellular trafficking and may regulate the subcellular location of multipass membrane proteins such as the dopamine transporter SLC6A3, leading to the modulation of dopamine neurotransmission. In the endoplasmic reticulum, plays a role in the quality control of protein folding by increasing clearance of misfolded proteins such as SGCE variants or holding them in an intermediate state for proper refolding. May have a redundant function with TOR1B in non-neural tissues. This Cricetus cricetus (Black-bellied hamster) protein is Torsin-1A (TOR1A).